We begin with the raw amino-acid sequence, 436 residues long: MEKLSERFSALQEKLMDLYESGVEDLETQIQHWKLLRQEQVLFYYARRHGILRLGYQPVPTLATSESKAKDAIAMGLLLESLQKSQYAEEPWTLVETSLETVKSPPADCFKKGPKSVEVYFDGDPENVMSYTVWSYIYYQTDDESWEKVEGHVDYTGAYYIEGTFKTYYIKFETDAKRYGTTGHWEVHVNKDTVFTPVTSSTPPVGVASQNSAPEPASTSDSPQRSSQVTHRYGRKASSPTITTIRRQKRRERQRQETPTRRRKTRSRSRSTEQRGGRATRRSLSRESAESPRRGGRGGGGPLTRSRSRSRSRTRESVDGGGVAPDEVGATLRSIGRQHSGRLAQLLDAAKDPPVILLRGAANTLKCYRYRFRKKHAGSFQFISTTWSWVGGHTTDRIGRSRILISFHTDREREKCLQQMKLPLGVEWSYGQFDDL.

Residues 1-201 (MEKLSERFSA…DTVFTPVTSS (201 aa)) are transactivation domain. A compositionally biased stretch (low complexity) spans 195 to 209 (FTPVTSSTPPVGVAS). The tract at residues 195–328 (FTPVTSSTPP…DGGGVAPDEV (134 aa)) is disordered. A compositionally biased stretch (polar residues) spans 210–230 (QNSAPEPASTSDSPQRSSQVT). Basic and acidic residues predominate over residues 284–293 (LSRESAESPR). The interval 352–436 (DPPVILLRGA…EWSYGQFDDL (85 aa)) is DNA-binding domain.

The protein belongs to the papillomaviridae E2 protein family. Binds DNA as homodimer. Interacts with protein E1; this interaction greatly increases E1 DNA-binding activity. Interacts with protein L1; this interaction enhances E2-dependent replication and transcription activation. Interacts with protein L2; this interaction inhibits E2 transcriptional activity but not DNA replication function E2. Interacts with protein E7; this interaction inhibits E7 oncogenic activity. Interacts with host TAF1; this interaction modulates E2-dependent transcriptional regulation. Interacts with host BRD4; this interaction mediates E2 transcriptional activation function. Additionally, the interaction with host BRD4 on mitotic chromosomes mediates tethering of the viral genome. Interacts with host TOPBP1; this interaction is required for optimal viral DNA replication. Phosphorylated.

The protein localises to the host nucleus. Functionally, plays a role in the initiation of viral DNA replication. A dimer of E2 interacts with a dimer of E1 in order to improve specificity of E1 DNA binding activity. Once the complex recognizes and binds DNA at specific sites, the E2 dimer is removed from DNA. E2 also regulates viral transcription through binding to the E2RE response element (5'-ACCNNNNNNGGT-3') present in multiple copies in the regulatory regions of the viral genome. Activates or represses transcription depending on E2RE's position with regards to proximal promoter elements including the TATA-box. Repression occurs by sterically hindering the assembly of the transcription initiation complex. The polypeptide is Regulatory protein E2 (Human papillomavirus 22).